Consider the following 340-residue polypeptide: Putative inactive cytochrome P450 family member 4Z2 (340 aa).

The Cytoplasmic segment spans residues Met1 to Leu9. Residues Met10 to Ile30 form a helical; Signal-anchor for type II membrane protein membrane-spanning segment. Residues Arg31 to Cys340 are Lumenal-facing.

The protein belongs to the cytochrome P450 family. Heme serves as cofactor. In terms of tissue distribution, detected at low levels in mammary gland and mammary carcinoma.

It localises to the membrane. This Homo sapiens (Human) protein is Putative inactive cytochrome P450 family member 4Z2 (CYP4Z2P).